The chain runs to 1521 residues: uncharacterized protein (1521 aa).

Disordered regions lie at residues methionine 1–asparagine 20, threonine 85–asparagine 124, alanine 218–serine 254, valine 431–threonine 482, and asparagine 735–glutamine 797. Low complexity-rich tracts occupy residues asparagine 94–proline 108, serine 219–serine 254, and valine 431–serine 454. Residues proline 455–histidine 464 are compositionally biased toward polar residues. Composition is skewed to low complexity over residues asparagine 465 to threonine 482 and asparagine 735 to leucine 762. A compositionally biased stretch (polar residues) spans serine 763–proline 774. Positions asparagine 775–glutamine 788 are enriched in low complexity. Positions isoleucine 853–asparagine 903 form a coiled coil. Positions glutamine 1398–serine 1453 are enriched in low complexity. Residues glutamine 1398–arginine 1455 are disordered.

This is an uncharacterized protein from Dictyostelium discoideum (Social amoeba).